The chain runs to 279 residues: 30 kDa ribonucleoprotein, chloroplastic (279 aa).

One can recognise an RRM 1 domain in the interval 87 to 165 (LKIFVGNLLF…RALRVNSGPP (79 aa)). A disordered region spans residues 156-187 (RALRVNSGPPPEKRENSSFRENSSFRGGSRGG). The interval 166 to 193 (PEKRENSSFRENSSFRGGSRGGGSFDSS) is linker (Gly-rich). One can recognise an RRM 2 domain in the interval 194-272 (NRVYVGNLAW…RAIRVSPAEA (79 aa)).

Expressed at high levels in the leaves and seedlings, and lower levels are seen in the stems and roots.

The protein resides in the plastid. The protein localises to the chloroplast. Could be involved in splicing and/or processing of chloroplast RNA's. In Nicotiana plumbaginifolia (Leadwort-leaved tobacco), this protein is 30 kDa ribonucleoprotein, chloroplastic.